A 416-amino-acid chain; its full sequence is Creatine kinase U-type, mitochondrial (416 aa).

Residues 1–39 (MAGPFSRLLSARPGLRLLALAGAGSLAAGFLLRSEPVRA) constitute a mitochondrion transit peptide. Residues 40-64 (ASERRRLYPPSAEYPDLRKHNNCMA) are cardiolipin-binding. One can recognise a Phosphagen kinase N-terminal domain in the interval 45 to 131 (RLYPPSAEYP…FDPVIQERHN (87 aa)). Serine 151 carries the phosphoserine modification. In terms of domain architecture, Phosphagen kinase C-terminal spans 158–400 (YVLSSRVRTG…NFLIDCERRL (243 aa)). 161 to 165 (SSRVR) provides a ligand contact to ATP. Serine 196 bears the Phosphoserine mark. A Phosphothreonine modification is found at threonine 213. Residue histidine 224 coordinates ATP. Serine 232 is modified (phosphoserine). Residues arginine 269, arginine 325, and 353 to 358 (RGTGGV) each bind ATP. Residue threonine 355 is modified to Phosphothreonine. The residue at position 365 (serine 365) is a Phosphoserine. Position 368 (aspartate 368) interacts with ATP.

The protein belongs to the ATP:guanido phosphotransferase family. Exists as an octamer composed of four MTCK homodimers.

Its subcellular location is the mitochondrion inner membrane. It catalyses the reaction creatine + ATP = N-phosphocreatine + ADP + H(+). In terms of biological role, reversibly catalyzes the transfer of phosphate between ATP and various phosphogens (e.g. creatine phosphate). Creatine kinase isoenzymes play a central role in energy transduction in tissues with large, fluctuating energy demands, such as skeletal muscle, heart, brain and spermatozoa. The chain is Creatine kinase U-type, mitochondrial (CKMT1) from Bos taurus (Bovine).